A 142-amino-acid polypeptide reads, in one-letter code: Large ribosomal subunit protein uL11 (142 aa).

The protein belongs to the universal ribosomal protein uL11 family. In terms of assembly, part of the ribosomal stalk of the 50S ribosomal subunit. Interacts with L10 and the large rRNA to form the base of the stalk. L10 forms an elongated spine to which L12 dimers bind in a sequential fashion forming a multimeric L10(L12)X complex. In terms of processing, one or more lysine residues are methylated.

Forms part of the ribosomal stalk which helps the ribosome interact with GTP-bound translation factors. This Proteus mirabilis (strain HI4320) protein is Large ribosomal subunit protein uL11.